The sequence spans 202 residues: Chromophore lyase CpcT/CpeT 2 (202 aa).

It belongs to the CpcT/CpeT biliprotein lyase family.

In terms of biological role, covalently attaches a chromophore to Cys residue(s) of phycobiliproteins. This is Chromophore lyase CpcT/CpeT 2 from Gloeobacter violaceus (strain ATCC 29082 / PCC 7421).